The following is a 556-amino-acid chain: Guanosine-diphosphatase (556 aa).

The Cytoplasmic portion of the chain corresponds to 1–12 (MTPTMKSIARRK). Residues 13–33 (ALLIALSIFAVTFILWNGFPG) form a helical; Signal-anchor for type II membrane protein membrane-spanning segment. Over 34-556 (SSNRPLPSSN…GWNCNVKEEI (523 aa)) the chain is Lumenal. Glu256 functions as the Proton acceptor in the catalytic mechanism. Residue Asn372 is glycosylated (N-linked (GlcNAc...) asparagine).

Belongs to the GDA1/CD39 NTPase family. It depends on Ca(2+) as a cofactor. Mn(2+) is required as a cofactor.

The protein localises to the golgi apparatus membrane. It catalyses the reaction GDP + H2O = GMP + phosphate + H(+). It participates in protein modification; protein glycosylation. Its function is as follows. After transfer of sugars to endogenous macromolecular acceptors, the enzyme converts nucleoside diphosphates to nucleoside monophosphates which in turn exit the Golgi lumen in a coupled antiporter reaction, allowing entry of additional nucleotide sugar from the cytosol. This is Guanosine-diphosphatase (gdp1) from Schizosaccharomyces pombe (strain 972 / ATCC 24843) (Fission yeast).